We begin with the raw amino-acid sequence, 585 residues long: Glutamate decarboxylase (585 aa).

Over residues K35–M56 the composition is skewed to polar residues. A disordered region spans residues K35–Y60. K318 carries the post-translational modification N6-(pyridoxal phosphate)lysine.

This sequence belongs to the group II decarboxylase family. Requires pyridoxal 5'-phosphate as cofactor.

The catalysed reaction is L-glutamate + H(+) = 4-aminobutanoate + CO2. This chain is Glutamate decarboxylase (GAD1), found in Saccharomyces cerevisiae (strain ATCC 204508 / S288c) (Baker's yeast).